The sequence spans 360 residues: MKALILVGGYGTRLRPLTLTVPKPLVEFCNKPILLHQVEALVKAGVRHVILAVSYMSELLEREMRAQEQRLGIKISLSHEKEPLGTAGPLALARELLTDNQEPFFVLNSDVICDFPFDDMLKFHQQHGREGTIVVTKVEEPSKYGVVVYEGDSGRIHRFVEKPQVFVSNKINAGMYIFSPAMLRRIQLRPTSIEKEIFPVMAEEGQLYAMELQGFWMDIGQPKDFLTGMCMYLQSVRQQAPERLRAGPGFLGNVLVDPTAVIGQNCTIGPNVTIGAGVVLEDGVRVKRCTILKGAHIRSHSWLESCIVGWSSSVGQWVRMENVTVLGEDVIVNDELYINGANVLPHKSITDSVPEPRIIM.

A substrate-binding domain region spans residues 2–222 (KALILVGGYG…QGFWMDIGQP (221 aa)). A GDP-alpha-D-mannose-binding site is contributed by aspartate 110. Aspartate 110 contacts Mg(2+). Residue lysine 162 is part of the active site. Position 218 (aspartate 218) interacts with GDP-alpha-D-mannose. Position 218 (aspartate 218) interacts with Mg(2+). Residues 245-360 (RAGPGFLGNV…DSVPEPRIIM (116 aa)) form a hexapeptide repeat domain region.

This sequence belongs to the transferase hexapeptide repeat family. Component of the GMPPA-GMPPB mannose-1-phosphate guanylyltransferase complex composed of 4 gmppa subunits and 8 gmppb subunits; the complex is organized into three layers, a central layer made up of 2 gmppa dimers sandwiched between two layers each made up of 2 gmppb dimers. Catalytic activity of gmppb is reduced when part of the complex and binding of GDP-alpha-D-Mannose by gmppa induces allosteric feedback inhibition of gmppb. Requires Mg(2+) as cofactor.

It catalyses the reaction alpha-D-mannose 1-phosphate + GTP + H(+) = GDP-alpha-D-mannose + diphosphate. The protein operates within nucleotide-sugar biosynthesis; GDP-alpha-D-mannose biosynthesis; GDP-alpha-D-mannose from alpha-D-mannose 1-phosphate (GTP route): step 1/1. With respect to regulation, enzyme activity is reduced by incorporation into the GMPPA-GMPPB mannose-1-phosphate guanylyltransferase complex. Allosterically inhibited, when part of the GMPPA-GMPPB complex, by GDP-alpha-D-mannose binding to GMPPA. Catalytic subunit of the GMPPA-GMPPB mannose-1-phosphate guanylyltransferase complex. Catalyzes the formation of GDP-mannose, an essential precursor of glycan moieties of glycoproteins and glycolipids. Can catalyze the reverse reaction in vitro. Together with GMPPA regulates GDP-alpha-D-mannose levels. This is Mannose-1-phosphate guanylyltransferase catalytic subunit beta (gmppb) from Danio rerio (Zebrafish).